A 443-amino-acid polypeptide reads, in one-letter code: Transcriptional adapter 2-alpha (443 aa).

Residue serine 6 is modified to Phosphoserine. The ZZ-type zinc-finger motif lies at 12–69 (SDKPPCRGCSSYLMEPYIKCAECGPPPFFLCLQCFTRGFEYKKHQSDHTYEIMTSDFP). Zn(2+) contacts are provided by cysteine 17, cysteine 20, cysteine 31, cysteine 34, cysteine 42, cysteine 45, histidine 55, and histidine 59. Residues 70-122 (VLDPSWTAQEEMALLEAVMDCGFGNWQDVANQMCTKTKEECEKHYMKHFINNP) enclose the SANT domain. Glycyl lysine isopeptide (Lys-Gly) (interchain with G-Cter in SUMO2) cross-links involve residues lysine 132 and lysine 138. The 88-residue stretch at 356–443 (NSGRRSAPPL…LIREGYITKA (88 aa)) folds into the SWIRM domain. A DNA-binding region spans residues 426 to 435 (KTRKIYDFLI).

Interacts with GCN5 and NR3C1. Associated with the P/CAF protein in the PCAF complex. Component of the PCAF complex, at least composed of TADA2L/ADA2, TADA3L/ADA3, TAF5L/PAF65-beta, TAF6L/PAF65-alpha, TAF10/TAFII30, TAF12/TAFII20, TAF9/TAFII31 and TRRAP. Component of the ADA2A-containing complex (ATAC), composed of KAT14, KAT2A, TADA2L, TADA3L, ZZ3, MBIP, WDR5, YEATS2, CCDC101 and DR1. Interacts with CCDC134.

It localises to the nucleus. The protein resides in the chromosome. Functionally, component of the ATAC complex, a complex with histone acetyltransferase activity on histones H3 and H4. Required for the function of some acidic activation domains, which activate transcription from a distant site. Binds double-stranded DNA. Binds dinucleosomes, probably at the linker region between neighboring nucleosomes. Plays a role in chromatin remodeling. May promote TP53/p53 'Lys-321' acetylation, leading to reduced TP53 stability and transcriptional activity. May also promote XRCC6 acetylation thus facilitating cell apoptosis in response to DNA damage. The protein is Transcriptional adapter 2-alpha (Tada2a) of Rattus norvegicus (Rat).